A 586-amino-acid chain; its full sequence is Aspartate--tRNA(Asp/Asn) ligase (586 aa).

E175 serves as a coordination point for L-aspartate. Positions 199–202 (QIFK) are aspartate. R221 contributes to the L-aspartate binding site. ATP contacts are provided by residues 221–223 (RDE) and Q230. H448 provides a ligand contact to L-aspartate. E482 contributes to the ATP binding site. R489 provides a ligand contact to L-aspartate. 534 to 537 (GVDR) serves as a coordination point for ATP.

This sequence belongs to the class-II aminoacyl-tRNA synthetase family. Type 1 subfamily. Homodimer.

It localises to the cytoplasm. It catalyses the reaction tRNA(Asx) + L-aspartate + ATP = L-aspartyl-tRNA(Asx) + AMP + diphosphate. Functionally, aspartyl-tRNA synthetase with relaxed tRNA specificity since it is able to aspartylate not only its cognate tRNA(Asp) but also tRNA(Asn). Reaction proceeds in two steps: L-aspartate is first activated by ATP to form Asp-AMP and then transferred to the acceptor end of tRNA(Asp/Asn). This Syntrophomonas wolfei subsp. wolfei (strain DSM 2245B / Goettingen) protein is Aspartate--tRNA(Asp/Asn) ligase.